A 358-amino-acid polypeptide reads, in one-letter code: Homoserine O-succinyltransferase (358 aa).

The active-site Acyl-thioester intermediate is the Cys146. Residues Lys167 and Ser196 each coordinate substrate. His239 serves as the catalytic Proton acceptor. The active site involves Glu241. Arg253 contacts substrate.

This sequence belongs to the MetA family.

It is found in the cytoplasm. The catalysed reaction is L-homoserine + succinyl-CoA = O-succinyl-L-homoserine + CoA. It functions in the pathway amino-acid biosynthesis; L-methionine biosynthesis via de novo pathway; O-succinyl-L-homoserine from L-homoserine: step 1/1. Its function is as follows. Transfers a succinyl group from succinyl-CoA to L-homoserine, forming succinyl-L-homoserine. This is Homoserine O-succinyltransferase from Nitrosococcus oceani (strain ATCC 19707 / BCRC 17464 / JCM 30415 / NCIMB 11848 / C-107).